Reading from the N-terminus, the 677-residue chain is Potassium channel KAT1 (677 aa).

Residues 1–63 are Cytoplasmic-facing; sequence MSISWTRNFF…PFNPRYRAWE (63 aa). Residues 64-84 traverse the membrane as a helical segment; that stretch reads MWLVLLVIYSAWICPFQFAFI. Residues 85–90 are Extracellular-facing; that stretch reads TYKKDA. Residues 91–111 form a helical membrane-spanning segment; the sequence is IFIIDNIVNGFFAIDIILTFF. Topologically, residues 112 to 134 are cytoplasmic; it reads VAYLDSHSYLLVDSPKKIAIRYL. A helical transmembrane segment spans residues 135–155; sequence STWFAFDVCSTAPFQPLSLLF. Residues 156–165 are Extracellular-facing; it reads NYNGSELGFR. The chain crosses the membrane as a helical; Voltage-sensor span at residues 166 to 186; it reads ILSMLRLWRLRRVSSLFARLE. At 187–200 the chain is on the cytoplasmic side; the sequence is KDIRFNYFWIRCTK. Residues 201 to 221 form a helical membrane-spanning segment; that stretch reads LISVTLFAIHCAGCFNYLIAD. Over 222–248 the chain is Extracellular; the sequence is RYPNPRKTWIGAVYPNFKEASLWNRYV. An intramembrane region (pore-forming) is located at residues 249–268; sequence TALYWSITTLTTTGYGDFHA. Over 269–272 the chain is Extracellular; that stretch reads ENPR. A helical membrane pass occupies residues 273–293; sequence EMLFDIFFMMFNLGLTAYLIG. The Cytoplasmic portion of the chain corresponds to 294–677; sequence NMTNLVVHWT…DGDHLYFSSN (384 aa). Residue 377-496 participates in a nucleoside 3',5'-cyclic phosphate binding; that stretch reads LFQGVSRNFL…RVIMNNLFMK (120 aa). Basic and acidic residues predominate over residues 568 to 577; it reads IERAKVERSS. Residues 568-601 form a disordered region; that stretch reads IERAKVERSSSETAGRSYANDSSKKDPYCSSSNQ. Residues 612-677 form the KHA domain; it reads RVTIHMMSES…DGDHLYFSSN (66 aa).

Belongs to the potassium channel family. Plant (TC 1.A.1.4) subfamily. The potassium channel is probably composed of a homo- or heterotetrameric complex of pore-forming subunits. May interact with AKT2 and KAT2. Interacts with SLAC1 and SLAH3. As to expression, expressed in guard cells, and in roots.

The protein localises to the membrane. In terms of biological role, highly selective inward-rectifying potassium channel. This voltage-gated channel could mediate long-term potassium influx into guard cells leading to stomatal opening. Assuming opened or closed conformations in response to the voltage difference across the membrane, the channel is activated by hyperpolarization. The channel activity is enhanced upon external acidification. Also permeable to ammonium ions. Blocked by tetraethylammonium and barium ions. The polypeptide is Potassium channel KAT1 (KAT1) (Arabidopsis thaliana (Mouse-ear cress)).